We begin with the raw amino-acid sequence, 458 residues long: Elongation factor 1-alpha (458 aa).

A N,N,N-trimethylglycine modification is found at Gly2. The residue at position 3 (Lys3) is an N6,N6-dimethyllysine; alternate. Lys3 carries the N6-methyllysine; alternate modification. The tr-type G domain occupies 5 to 240; it reads KTHVNVVVIG…DAIEPPVRPT (236 aa). The segment at 14 to 21 is G1; it reads GHVDSGKS. 14–21 is a binding site for GTP; sequence GHVDSGKS. Lys30 carries the N6-methyllysine modification. Residues 70–74 form a G2 region; that stretch reads GITID. Lys79 carries the post-translational modification N6,N6,N6-trimethyllysine. Residues 91 to 94 form a G3 region; sequence DAPG. GTP is bound by residues 91–95 and 153–156; these read DAPGH and NKMD. Positions 153–156 are G4; the sequence is NKMD. Residues 192–194 are G5; sequence SGW. Lys316 carries the N6,N6-dimethyllysine; alternate modification. Lys316 is subject to N6-methyllysine; alternate. Residue Lys390 is modified to N6-methyllysine.

Belongs to the TRAFAC class translation factor GTPase superfamily. Classic translation factor GTPase family. EF-Tu/EF-1A subfamily.

It localises to the cytoplasm. This protein promotes the GTP-dependent binding of aminoacyl-tRNA to the A-site of ribosomes during protein biosynthesis. The chain is Elongation factor 1-alpha (TEF) from Eremothecium gossypii (strain ATCC 10895 / CBS 109.51 / FGSC 9923 / NRRL Y-1056) (Yeast).